Here is a 402-residue protein sequence, read N- to C-terminus: Protein lag-2 (402 aa).

Positions 1 to 15 (MIAYFLLLLTCLPVL) are cleaved as a signal peptide. Topologically, residues 16 to 279 (QARVEVHQEF…TTTTPTTVEI (264 aa)) are extracellular. Residues Asn72 and Asn105 are each glycosylated (N-linked (GlcNAc...) asparagine). The DSL domain maps to 122–166 (VTCARNYFGNRCENFCDAHLAKAARKRCDAMGRLRCDIGWMGPHC). 9 disulfide bridges follow: Cys124/Cys133, Cys137/Cys149, Cys157/Cys166, Cys175/Cys183, Cys177/Cys204, Cys206/Cys215, Cys233/Cys245, Cys239/Cys254, and Cys256/Cys265. 2 consecutive EGF-like domains span residues 171 to 216 (DPRK…TRCE) and 229 to 266 (RPDACSVKDACLNGAKCFPNGPKVFCSCAVGFIGEFCE). An N-linked (GlcNAc...) asparagine glycan is attached at Asn194. A helical transmembrane segment spans residues 280-306 (TVSTSGYSSAVYITVALFVIFSIIIGC). Residues 307 to 402 (FKYKFKPMRQ…PPSIPACHYV (96 aa)) lie on the Cytoplasmic side of the membrane.

In terms of assembly, may interact with lin-12 / Notch receptor. Expressed in the gonad distal tip cell (DTC) of hermaphrodites.

It localises to the cell membrane. Probable ligand for lin-12/Notch and glp-1/Notch receptors and involved in the mediation of Notch signaling. Involved in the lin-12/Notch pathway signaling of cell fate in vulval precursor cells (VPCs) and in the postembryonic mesodermal lineage (M lineage), acting redundantly with dsl-1 and apx-1. Functions in uterine cells to promote basement membrane mobility during tissue remodeling. Required for oocyte growth control, acting redundantly with apx-1, perhaps signaling via the glp-1/Notch pathway. Plays a role in Notch-dependent induction of left-right asymmetry in interneurons and motoneurons. Involved in maintaining the developmentally arrested larval state known as dauer, probably signaling in the glp-1/Notch pathway. Required for normal sleep bout quantity and arousal thresholds during the transition from the last larval stage to adulthood in well-fed animals. This Caenorhabditis elegans protein is Protein lag-2.